Reading from the N-terminus, the 171-residue chain is Neuronal vesicle trafficking-associated protein 2 (171 aa).

The segment covering 1–10 (MVKLNSNPSE) has biased composition (polar residues). Residues 1 to 21 (MVKLNSNPSEKGTKPPSVEDG) are disordered. At 1 to 71 (MVKLNSNPSE…FRVPKIAEFT (71 aa)) the chain is on the cytoplasmic side. The chain crosses the membrane as a helical; Signal-anchor for type II membrane protein span at residues 72 to 92 (VTILVSLALAFLACIVFLVVY). Over 93–171 (KAFTYDHSCP…EPKPPKTQGH (79 aa)) the chain is Lumenal.

It belongs to the NSG family.

It is found in the membrane. The protein resides in the golgi apparatus. Its subcellular location is the trans-Golgi network membrane. The protein localises to the cell projection. It localises to the dendrite. It is found in the endosome membrane. The protein resides in the early endosome membrane. Its subcellular location is the late endosome membrane. The protein localises to the lysosome lumen. It localises to the cytoplasmic vesicle membrane. It is found in the golgi stack membrane. The protein resides in the endosome. Its subcellular location is the multivesicular body membrane. The sequence is that of Neuronal vesicle trafficking-associated protein 2 from Homo sapiens (Human).